Here is a 415-residue protein sequence, read N- to C-terminus: von Willebrand factor A domain-containing protein 1 (415 aa).

Residues 1-18 (MLFWTVLSMALSLRLALA) form the signal peptide. The VWFA domain maps to 34 to 213 (DLLFLLDSSA…ELRGAIIDAM (180 aa)). Ser-74, Ser-80, and Ser-93 each carry phosphoserine. 2 consecutive Fibronectin type-III domains span residues 214–305 (QPHQ…LQEE) and 307–405 (GPER…VPQA). Asn-264 carries an N-linked (GlcNAc...) asparagine glycan. A disulfide bridge links Cys-369 with Cys-393.

As to quaternary structure, homodimer or homomultimer; disulfide-linked. Interacts with HSPG2. N-glycosylated.

Its subcellular location is the secreted. The protein localises to the extracellular space. It localises to the extracellular matrix. The protein resides in the basement membrane. Its function is as follows. Promotes matrix assembly. Involved in the organization of skeletal muscles and in the formation of neuromuscular junctions. The protein is von Willebrand factor A domain-containing protein 1 (Vwa1) of Rattus norvegicus (Rat).